We begin with the raw amino-acid sequence, 415 residues long: L-cysteine:1D-myo-inositol 2-amino-2-deoxy-alpha-D-glucopyranoside ligase (415 aa).

C43 provides a ligand contact to Zn(2+). L-cysteinyl-5'-AMP-binding positions include C43 to T46, T58, and N81 to T83. A 'HIGH' region motif is present at residues I45–H55. Positions E188 to P193 match the 'ERGGDP' region motif. L-cysteinyl-5'-AMP is bound at residue W229. Position 233 (C233) interacts with Zn(2+). G251 to D253 provides a ligand contact to L-cysteinyl-5'-AMP. H258 is a Zn(2+) binding site. V285 contacts L-cysteinyl-5'-AMP. Positions K291–S295 match the 'KMSKS' region motif.

This sequence belongs to the class-I aminoacyl-tRNA synthetase family. MshC subfamily. Monomer. Zn(2+) serves as cofactor.

The catalysed reaction is 1D-myo-inositol 2-amino-2-deoxy-alpha-D-glucopyranoside + L-cysteine + ATP = 1D-myo-inositol 2-(L-cysteinylamino)-2-deoxy-alpha-D-glucopyranoside + AMP + diphosphate + H(+). Catalyzes the ATP-dependent condensation of GlcN-Ins and L-cysteine to form L-Cys-GlcN-Ins. The protein is L-cysteine:1D-myo-inositol 2-amino-2-deoxy-alpha-D-glucopyranoside ligase of Cellulomonas flavigena (strain ATCC 482 / DSM 20109 / BCRC 11376 / JCM 18109 / NBRC 3775 / NCIMB 8073 / NRS 134).